The following is a 530-amino-acid chain: NAD(+) kinase (530 aa).

3 disordered regions span residues 1–27, 57–99, and 486–530; these read MKEN…HNNN, ISSE…KSSN, and SLEA…RFSV. Residues 13–25 show a composition bias toward basic and acidic residues; the sequence is WVNEEDGRNDHHN. Positions 59–75 are enriched in low complexity; the sequence is SESSSRRSSLLNKDSSL. The segment covering 88-99 has biased composition (polar residues); that stretch reads INGTRGSSKSSN. Phosphoserine is present on residues S499 and S503. The span at 499 to 508 shows a compositional bias: acidic residues; sequence SDDESDDESV.

The protein belongs to the NAD kinase family. In terms of assembly, homohexamer.

It catalyses the reaction NAD(+) + ATP = ADP + NADP(+) + H(+). Functionally, specifically phosphorylates NAD in the presence of ATP, dATP, or CTP as phosphoryl donors. This Saccharomyces cerevisiae (strain ATCC 204508 / S288c) (Baker's yeast) protein is NAD(+) kinase (UTR1).